The following is a 233-amino-acid chain: MKLIVGLGNPGPKYAGHRHNIGFMALDRIAADHGFGAWKDKHQGSLSEGRFGSDRAVLLKPLTFMNNSGQSVQAAMRFYKLEPEDVIVLHDEIDLAPGKVKYKTGGGHAGHNGLRSIHAHIGPEYARVRLGVGHPGHKDRVPGYVLHDFAKADQDWLDDVLRGVSDGAPFLATTEAAKFSNAVALRVSPRRSGTGQKGKDKPPAPAKQQATATKAEPEPDTRSALQKLMERFK.

Y14 is a binding site for tRNA. The active-site Proton acceptor is H19. Residues F64, N66, and N112 each coordinate tRNA. Positions 187–233 (VSPRRSGTGQKGKDKPPAPAKQQATATKAEPEPDTRSALQKLMERFK) are disordered.

It belongs to the PTH family. As to quaternary structure, monomer.

It localises to the cytoplasm. It catalyses the reaction an N-acyl-L-alpha-aminoacyl-tRNA + H2O = an N-acyl-L-amino acid + a tRNA + H(+). Functionally, hydrolyzes ribosome-free peptidyl-tRNAs (with 1 or more amino acids incorporated), which drop off the ribosome during protein synthesis, or as a result of ribosome stalling. Catalyzes the release of premature peptidyl moieties from peptidyl-tRNA molecules trapped in stalled 50S ribosomal subunits, and thus maintains levels of free tRNAs and 50S ribosomes. This chain is Peptidyl-tRNA hydrolase, found in Roseobacter denitrificans (strain ATCC 33942 / OCh 114) (Erythrobacter sp. (strain OCh 114)).